The sequence spans 350 residues: HTH-type DNA-binding transcriptional activator EutR (350 aa).

The region spanning 243-344 (SRAREYVLEN…AEKPSLTLHQ (102 aa)) is the HTH araC/xylS-type domain. 2 consecutive DNA-binding regions (H-T-H motif) follow at residues 260–281 (LDLC…HAIL) and 311–334 (VKDA…QQLF).

It participates in amine and polyamine degradation; ethanolamine degradation. Functionally, activates the transcription of the eut operon, allowing utilization of ethanolamine (EA). Positively regulates its own transcription. Probably binds EA and vitamin B12 as effectors. Competes with ethanolamine ammonia-lysase (EAL, the first enzyme in the EA degradation pathway) for adenosylcobalamin. Ethanolamine-associated signaling mediated via this protein, but not EA degradation, impacts S.typhimurium survival within macrophages. Binds the promoter of ssrB and eutS in vitro; in mouse infection models binding to ssrB probably induces all 4 operons of pathogenicity island SPI-2. Its function is as follows. Expression of the eut operon allows this bacteria to use ethanolamine (EA) as a carbon, nitrogen and energy source. It relies on cobalamin (vitamin B12) both as a cofactor for the ethanolamine ammonia-lyase (EAL) activity and to induce the operon. EA enhances bacterial survival in macrophages in a concentration-dependent manner, suggesting it is an important nutrient in infection. This is HTH-type DNA-binding transcriptional activator EutR from Salmonella typhimurium (strain LT2 / SGSC1412 / ATCC 700720).